The chain runs to 680 residues: MTNPLLTPFELPPFSKILPEHVVPAVTKALNDCRENVERVVAQGAPYTWENLCQPLAEVDDVLGRIFSPVSHLNSVKNSPELREAYEQTLPLLSEYSTWVGQHEGLYKAYRDLRDGDHYATLNTAQKKAVDNALRDFELSGIGLPKEKQQRYGEIATRLSELGNQYSNNVLDATMGWTKLVTDEAELAGMPESALAAAKAQAEAKELEGYLLTLDIPSYLPVMTYCDNQALREEMYRAYSTRASDQGPNAGKWDNSKVMEEILALRHELAQLLGFENYAFKSLATKMAENPQQVLDFLTDLAKRARPQGEKELAQLRAFAKAEFGVDELQPWDIAYYSEKQKQHLYSISDEQLRPYFPENKAVNGLFEVVKRIYGITAKERKDVDVWHPDVRFFELYDENNELRGSFYLDLYARENKRGGAWMDDCVGQMRKADGSLQKPVAYLTCNFNRPVNGKPALFTHDEVITLFHEFGHGLHHMLTRIETAGVSGISGVPWDAVELPSQFMENWCWEPEALAFISGHYETGEPLPKELLDKMLAAKNYQAALFILRQLEFGLFDFRLHAEFRPDQGAKILETLAEIKKLVAVVPSPSWGRFPHAFSHIFAGGYAAGYYSYLWADVLAADAFSRFEEEGIFNRETGQSFLDNILSRGGSEEPMDLFKRFRGREPQLDAMLEHYGIKG.

A Zn(2+)-binding site is contributed by His-469. Residue Glu-470 is part of the active site. Positions 473 and 476 each coordinate Zn(2+).

It belongs to the peptidase M3 family. Zn(2+) is required as a cofactor.

The enzyme catalyses Hydrolysis of oligopeptides, with broad specificity. Gly or Ala commonly occur as P1 or P1' residues, but more distant residues are also important, as is shown by the fact that Z-Gly-Pro-Gly-|-Gly-Pro-Ala is cleaved, but not Z-(Gly)(5).. May play a specific role in the degradation of signal peptides after they are released from precursor forms of secreted proteins. Can cleave N-acetyl-L-Ala(4). This chain is Oligopeptidase A (prlC), found in Escherichia coli (strain K12).